A 284-amino-acid chain; its full sequence is D-tagatose-1,6-bisphosphate aldolase subunit GatY (284 aa).

Aspartate 82 serves as the catalytic Proton donor. The Zn(2+) site is built by histidine 83 and histidine 180. Dihydroxyacetone phosphate is bound at residue glycine 181. Position 208 (histidine 208) interacts with Zn(2+). Dihydroxyacetone phosphate contacts are provided by residues 209 to 211 (GAS) and 230 to 233 (NVAT).

The protein belongs to the class II fructose-bisphosphate aldolase family. TagBP aldolase GatY subfamily. Forms a complex with GatZ. Zn(2+) serves as cofactor.

It catalyses the reaction D-tagatofuranose 1,6-bisphosphate = D-glyceraldehyde 3-phosphate + dihydroxyacetone phosphate. It participates in carbohydrate metabolism; D-tagatose 6-phosphate degradation; D-glyceraldehyde 3-phosphate and glycerone phosphate from D-tagatose 6-phosphate: step 2/2. In terms of biological role, catalytic subunit of the tagatose-1,6-bisphosphate aldolase GatYZ, which catalyzes the reversible aldol condensation of dihydroxyacetone phosphate (DHAP or glycerone-phosphate) with glyceraldehyde 3-phosphate (G3P) to produce tagatose 1,6-bisphosphate (TBP). Requires GatZ subunit for full activity and stability. Is involved in the catabolism of galactitol. This chain is D-tagatose-1,6-bisphosphate aldolase subunit GatY, found in Escherichia coli O6:K15:H31 (strain 536 / UPEC).